Reading from the N-terminus, the 194-residue chain is Large ribosomal subunit protein eL15 (194 aa).

The tract at residues 162–194 (LTSAGRKSRGLRNKGKGAEKVRPSVRANKGKTK) is disordered. Positions 167–176 (RKSRGLRNKG) are enriched in basic residues.

Belongs to the eukaryotic ribosomal protein eL15 family.

The sequence is that of Large ribosomal subunit protein eL15 from Thermococcus onnurineus (strain NA1).